Consider the following 428-residue polypeptide: 4-hydroxy-3-methylbut-2-en-1-yl diphosphate synthase (flavodoxin) (428 aa).

Residues C315, C318, C361, and E368 each contribute to the [4Fe-4S] cluster site.

It belongs to the IspG family. Requires [4Fe-4S] cluster as cofactor.

The enzyme catalyses (2E)-4-hydroxy-3-methylbut-2-enyl diphosphate + oxidized [flavodoxin] + H2O + 2 H(+) = 2-C-methyl-D-erythritol 2,4-cyclic diphosphate + reduced [flavodoxin]. Its pathway is isoprenoid biosynthesis; isopentenyl diphosphate biosynthesis via DXP pathway; isopentenyl diphosphate from 1-deoxy-D-xylulose 5-phosphate: step 5/6. Its function is as follows. Converts 2C-methyl-D-erythritol 2,4-cyclodiphosphate (ME-2,4cPP) into 1-hydroxy-2-methyl-2-(E)-butenyl 4-diphosphate. This Ralstonia pickettii (strain 12J) protein is 4-hydroxy-3-methylbut-2-en-1-yl diphosphate synthase (flavodoxin).